We begin with the raw amino-acid sequence, 648 residues long: Protein kinase YegI (648 aa).

The Protein kinase domain maps to 15–302 (TTLGRELGKG…KAWVAALDSL (288 aa)). ATP-binding positions include 21–29 (LGKGGEGAV) and Lys-41. Asp-143 serves as the catalytic Proton acceptor.

Post-translationally, autophosphorylated. Dephosphorylated by PphC.

Its function is as follows. Probable serine/threonine kinase. This is Protein kinase YegI (yegI) from Escherichia coli (strain K12).